The sequence spans 160 residues: MAHNGVADVQLKAGSAYGMTVAVISASWNADITDQLHEHSIAAAKEAGAQVSEWRVAGALELPVAVAAACKRFDAVVANGCVIQGETEHFRVVCDAVTYGLTRAGMDSGTPVGNGVLTVDTHEQAVDRAGGVDAKEDKGRDAAVAAIHTALVLRQIERGV.

5-amino-6-(D-ribitylamino)uracil is bound by residues Trp-28, 59–61 (ALE), and 81–83 (CVI). 86–87 (ET) is a (2S)-2-hydroxy-3-oxobutyl phosphate binding site. The active-site Proton donor is the His-89. A 5-amino-6-(D-ribitylamino)uracil-binding site is contributed by Asn-114. Position 128 (Arg-128) interacts with (2S)-2-hydroxy-3-oxobutyl phosphate.

Belongs to the DMRL synthase family.

It carries out the reaction (2S)-2-hydroxy-3-oxobutyl phosphate + 5-amino-6-(D-ribitylamino)uracil = 6,7-dimethyl-8-(1-D-ribityl)lumazine + phosphate + 2 H2O + H(+). The protein operates within cofactor biosynthesis; riboflavin biosynthesis; riboflavin from 2-hydroxy-3-oxobutyl phosphate and 5-amino-6-(D-ribitylamino)uracil: step 1/2. Functionally, catalyzes the formation of 6,7-dimethyl-8-ribityllumazine by condensation of 5-amino-6-(D-ribitylamino)uracil with 3,4-dihydroxy-2-butanone 4-phosphate. This is the penultimate step in the biosynthesis of riboflavin. This is 6,7-dimethyl-8-ribityllumazine synthase from Corynebacterium jeikeium (strain K411).